Consider the following 284-residue polypeptide: Phosphoribosylaminoimidazole-succinocarboxamide synthase (284 aa).

It belongs to the SAICAR synthetase family.

It catalyses the reaction 5-amino-1-(5-phospho-D-ribosyl)imidazole-4-carboxylate + L-aspartate + ATP = (2S)-2-[5-amino-1-(5-phospho-beta-D-ribosyl)imidazole-4-carboxamido]succinate + ADP + phosphate + 2 H(+). It functions in the pathway purine metabolism; IMP biosynthesis via de novo pathway; 5-amino-1-(5-phospho-D-ribosyl)imidazole-4-carboxamide from 5-amino-1-(5-phospho-D-ribosyl)imidazole-4-carboxylate: step 1/2. The chain is Phosphoribosylaminoimidazole-succinocarboxamide synthase from Chromobacterium violaceum (strain ATCC 12472 / DSM 30191 / JCM 1249 / CCUG 213 / NBRC 12614 / NCIMB 9131 / NCTC 9757 / MK).